The primary structure comprises 319 residues: Beta-ketoacyl-[acyl-carrier-protein] synthase III (319 aa).

Active-site residues include cysteine 114 and histidine 246. The segment at 247-251 (QANIR) is ACP-binding. Residue asparagine 276 is part of the active site.

It belongs to the thiolase-like superfamily. FabH family. In terms of assembly, homodimer.

The protein resides in the cytoplasm. It carries out the reaction malonyl-[ACP] + acetyl-CoA + H(+) = 3-oxobutanoyl-[ACP] + CO2 + CoA. It participates in lipid metabolism; fatty acid biosynthesis. Catalyzes the condensation reaction of fatty acid synthesis by the addition to an acyl acceptor of two carbons from malonyl-ACP. Catalyzes the first condensation reaction which initiates fatty acid synthesis and may therefore play a role in governing the total rate of fatty acid production. Possesses both acetoacetyl-ACP synthase and acetyl transacylase activities. Its substrate specificity determines the biosynthesis of branched-chain and/or straight-chain of fatty acids. The sequence is that of Beta-ketoacyl-[acyl-carrier-protein] synthase III from Thiobacillus denitrificans (strain ATCC 25259 / T1).